The following is a 122-amino-acid chain: MIQQETRLKVADNSGAREILTIKVLGGSGRKFANIGDVIVASVKQATPGGAVKKGDVVKAVIVRTKTGARRPDGSYIKFDDNAAVIIRDDKTPRGTRIFGPVAREMREAGYMKIVSLAPEVL.

The protein belongs to the universal ribosomal protein uL14 family. As to quaternary structure, part of the 50S ribosomal subunit. Forms a cluster with proteins L3 and L19. In the 70S ribosome, L14 and L19 interact and together make contacts with the 16S rRNA in bridges B5 and B8.

Binds to 23S rRNA. Forms part of two intersubunit bridges in the 70S ribosome. In Streptococcus uberis (strain ATCC BAA-854 / 0140J), this protein is Large ribosomal subunit protein uL14.